We begin with the raw amino-acid sequence, 598 residues long: 2-succinyl-5-enolpyruvyl-6-hydroxy-3-cyclohexene-1-carboxylate synthase (598 aa).

The protein belongs to the TPP enzyme family. MenD subfamily. As to quaternary structure, homodimer. It depends on Mg(2+) as a cofactor. Mn(2+) serves as cofactor. Thiamine diphosphate is required as a cofactor.

It catalyses the reaction isochorismate + 2-oxoglutarate + H(+) = 5-enolpyruvoyl-6-hydroxy-2-succinyl-cyclohex-3-ene-1-carboxylate + CO2. The protein operates within quinol/quinone metabolism; 1,4-dihydroxy-2-naphthoate biosynthesis; 1,4-dihydroxy-2-naphthoate from chorismate: step 2/7. It functions in the pathway cofactor biosynthesis; phylloquinone biosynthesis. In terms of biological role, catalyzes the thiamine diphosphate-dependent decarboxylation of 2-oxoglutarate and the subsequent addition of the resulting succinic semialdehyde-thiamine pyrophosphate anion to isochorismate to yield 2-succinyl-5-enolpyruvyl-6-hydroxy-3-cyclohexene-1-carboxylate (SEPHCHC). In Prochlorococcus marinus (strain NATL2A), this protein is 2-succinyl-5-enolpyruvyl-6-hydroxy-3-cyclohexene-1-carboxylate synthase.